Consider the following 420-residue polypeptide: Probable glycosyltransferase YdaM (420 aa).

Transmembrane regions (helical) follow at residues 4–24, 299–319, 332–352, and 371–391; these read TLFFISLSLIWVMLLYHMFLM, IIFDLFYFFFTYFLFFFGVIM, LHLSVGFLAMILWILAFFLFM, and FFIVFLMYFTYSQAWIVLVIY.

It belongs to the glycosyltransferase 2 family.

The protein resides in the cell membrane. The chain is Probable glycosyltransferase YdaM (ydaM) from Bacillus subtilis (strain 168).